The sequence spans 146 residues: Angiogenin (146 aa).

Residues 1–24 form the signal peptide; the sequence is MVMGPHLLLLVFILGLGLTPPTLA. The residue at position 25 (Gln-25) is a Pyrrolidone carboxylic acid. His-37 functions as the Proton acceptor in the catalytic mechanism. 3 disulfides stabilise this stretch: Cys-50–Cys-105, Cys-63–Cys-116, and Cys-81–Cys-131. Residues 55–59 carry the Nucleolar localization signal motif; the sequence is RLRNM. Residues Cys-105 and Ile-127 each contribute to the tRNA site. Residue His-138 is the Proton donor of the active site.

It belongs to the pancreatic ribonuclease family. As to quaternary structure, homodimer. Interacts with RNH1; inhibiting ANG ribonuclease activity. Interacts with PCNA.

Its subcellular location is the secreted. The protein localises to the nucleus. The protein resides in the nucleolus. It localises to the cytoplasm. It is found in the stress granule. Has weak tRNA ribonuclease activity by itself due to partial autoinhibition by its C-terminus, which folds into a short alpha-helix that partially occludes the substrate-binding site. In absence of stress, the ribonuclease activity is inhibited by RNH1 in the cytoplasm. In response to stress, dissociates from RNH1 in the cytoplasm and associates with cytoplasmic ribosomes with vacant A-sites: ribosomes directly activate the tRNA ribonuclease activity of ANG by refolding the C-terminal alpha-helix. In response to stress, the angiogenic activity of ANG is inhibited by RNH1 in the nucleus. Its function is as follows. Secreted ribonuclease that can either promote or restrict cell proliferation of target cells, depending on the context. Endocytosed in target cells via its receptor PLXNB2 and translocates to the cytoplasm or nucleus. Under stress conditions, localizes to the cytoplasm and promotes the assembly of stress granules (SGs): specifically cleaves a subset of tRNAs within anticodon loops to produce tRNA-derived stress-induced fragments (tiRNAs), resulting in translation repression and inhibition of cell proliferation. tiRNas also prevent formation of apoptosome, thereby promoting cell survival. Preferentially cleaves RNAs between a pyrimidine and an adenosine residue, suggesting that it cleaves the anticodon loop of tRNA(Ala) (32-UUAGCAU-38) after positions 33 and 36. Cleaves a subset of tRNAs, including tRNA(Ala), tRNA(Glu), tRNA(Gly), tRNA(Lys), tRNA(Val), tRNA(His), tRNA(Asp) and tRNA(Sec). Under growth conditions and in differentiated cells, translocates to the nucleus and stimulates ribosomal RNA (rRNA) transcription, including that containing the initiation site sequences of 45S rRNA, thereby promoting cell growth and proliferation. Angiogenin induces vascularization of normal and malignant tissues via its ability to promote rRNA transcription. Involved in hematopoietic stem and progenitor cell (HSPC) growth and survival by promoting rRNA transcription in growth conditions and inhibiting translation in response to stress, respectively. Mediates the crosstalk between myeloid and intestinal epithelial cells to protect the intestinal epithelial barrier integrity: secreted by myeloid cells and promotes intestinal epithelial cells proliferation and survival. Also mediates osteoclast-endothelial cell crosstalk in growing bone: produced by osteoclasts and protects the neighboring vascular cells against senescence by promoting rRNA transcription. This is Angiogenin (ANG) from Saimiri sciureus (Common squirrel monkey).